The chain runs to 81 residues: Adipogenin (81 aa).

The chain crosses the membrane as a helical span at residues 16–36; sequence FLASWLCLPVGLLLFLLIVWL.

This sequence belongs to the adipogenin family.

It localises to the membrane. Its subcellular location is the nucleus. Plays a role in stimulating adipocyte differentiation and development. The chain is Adipogenin from Sus scrofa (Pig).